Consider the following 372-residue polypeptide: Recombinase Flp protein (372 aa).

Positions 85–367 (GGHNAVAEEI…EYVHSYAMGK (283 aa)) constitute a Tyr recombinase Flp-type domain. The active-site O-(3'-phospho-DNA)-tyrosine intermediate is Tyr-292.

It belongs to the 'phage' integrase family.

Its function is as follows. Catalyzes the recombination between the large inverted repetitions of the plasmid. The polypeptide is Recombinase Flp protein (Lachancea fermentati (Zygosaccharomyces fermentati)).